Here is a 334-residue protein sequence, read N- to C-terminus: MKKQIITATTAVVLGSTLFAGAASAQSIKVKKGDTLWDLSRKYDTTISKIKSENHLRSDIIYVGQTLSINGKSTSSKSSSSSSSSSTYKVKSGDSLWKISKKYGMTINELKKLNGLKSDLLRVGQVLKLKGSTSSSSSSSSKVSSSSTSTYKVKSGDSLSKIASKYGTTVSKLKSLNGLKSDVIYVNQVLKVKGTSTSSSKPASSSSSSSSKTSSTSLNVSKLVSDAKALVGTPYKWGGTTTSGFDCSGFIWYVLNKQTSVGRTSTAGYWSSMKSIASPSVGDFVFFTTYKSGPSHMGIYIGNNSFIHAGSDGVQISSLNNSYWKPRYLGAKRF.

The signal sequence occupies residues 1–25; it reads MKKQIITATTAVVLGSTLFAGAASA. 3 consecutive LysM domains span residues 26–69, 86–129, and 149–192; these read QSIK…TLSI, STYK…VLKL, and STYK…VLKV. Disordered regions lie at residues 70 to 89, 131 to 153, and 195 to 215; these read NGKS…STYK, GSTS…TYKV, and TSTS…KTSS. Low complexity-rich tracts occupy residues 72–87 and 132–153; these read KSTS…SSST and STSS…TYKV. One can recognise a NlpC/P60 domain in the interval 217-334; that stretch reads SLNVSKLVSD…KPRYLGAKRF (118 aa). The active-site Nucleophile is Cys-247. His-296 functions as the Proton acceptor in the catalytic mechanism. Residue His-308 is part of the active site.

It belongs to the peptidase C40 family.

The protein resides in the secreted. It localises to the cell wall. Its function is as follows. Cell wall hydrolase that cleaves gamma-D-glutamate-meso-diaminopimelate bonds in peptidoglycan. Seems to play a role in cell separation during vegetative growth. The sequence is that of Probable peptidoglycan endopeptidase LytE (lytE) from Bacillus subtilis (strain 168).